A 190-amino-acid chain; its full sequence is Surfactant protein C (190 aa).

A propeptide spanning residues 1–24 (MDVGSKEVLMESPPDYTAVPGGRL) is cleaved from the precursor. 2 S-palmitoyl cysteine lipidation sites follow: Cys-28 and Cys-29. Residues 59–190 (HMSQKHTEMV…LCGEVPLYYT (132 aa)) constitute a propeptide that is removed on maturation. The BRICHOS domain maps to 94–190 (FSIGSTGTVV…LCGEVPLYYT (97 aa)). The cysteines at positions 121 and 182 are disulfide-linked.

Its subcellular location is the secreted. The protein localises to the extracellular space. The protein resides in the surface film. In terms of biological role, pulmonary surfactant associated proteins promote alveolar stability by lowering the surface tension at the air-liquid interface in the peripheral air spaces. In Bos taurus (Bovine), this protein is Surfactant protein C (SFTPC).